We begin with the raw amino-acid sequence, 465 residues long: ATP synthase subunit beta (465 aa).

Gly148–Thr155 lines the ATP pocket.

Belongs to the ATPase alpha/beta chains family. In terms of assembly, F-type ATPases have 2 components, CF(1) - the catalytic core - and CF(0) - the membrane proton channel. CF(1) has five subunits: alpha(3), beta(3), gamma(1), delta(1), epsilon(1). CF(0) has three main subunits: a(1), b(2) and c(9-12). The alpha and beta chains form an alternating ring which encloses part of the gamma chain. CF(1) is attached to CF(0) by a central stalk formed by the gamma and epsilon chains, while a peripheral stalk is formed by the delta and b chains.

The protein resides in the cell inner membrane. It catalyses the reaction ATP + H2O + 4 H(+)(in) = ADP + phosphate + 5 H(+)(out). Its function is as follows. Produces ATP from ADP in the presence of a proton gradient across the membrane. The catalytic sites are hosted primarily by the beta subunits. In Neisseria meningitidis serogroup C (strain 053442), this protein is ATP synthase subunit beta.